A 216-amino-acid chain; its full sequence is 3-isopropylmalate dehydratase small subunit (216 aa).

The protein belongs to the LeuD family. LeuD type 1 subfamily. As to quaternary structure, heterodimer of LeuC and LeuD.

It carries out the reaction (2R,3S)-3-isopropylmalate = (2S)-2-isopropylmalate. It functions in the pathway amino-acid biosynthesis; L-leucine biosynthesis; L-leucine from 3-methyl-2-oxobutanoate: step 2/4. In terms of biological role, catalyzes the isomerization between 2-isopropylmalate and 3-isopropylmalate, via the formation of 2-isopropylmaleate. The polypeptide is 3-isopropylmalate dehydratase small subunit (Burkholderia ambifaria (strain MC40-6)).